Reading from the N-terminus, the 303-residue chain is MSETPRLLFVHAHPDDESLSNGATIAHYTSRGAQVHVVTCTLGEEGEVIGDRWAQLTADHADQLGGYRIGELTAALRALGVSAPIYLGGAGRWRDSGMAGTDQRSQRRFVDADPRQTVGALVAIIRELRPHVVVTYDPNGGYGHPDHVHTHTVTTAAVAAAGVGSGTADHPGDPWTVPKFYWTVLGLSALISGARALVPDDLRPEWVLPRADEIAFGYSDDGIDAVVEADEQARAAKVAALAAHATQVVVGPTGRAAALSNNLALPILADEHYVLAGGSAGARDERGWETDLLAGLGFTASGT.

The Zn(2+) site is built by H13, D16, and H147.

The protein belongs to the MshB deacetylase family. Zn(2+) serves as cofactor.

It carries out the reaction 1D-myo-inositol 2-acetamido-2-deoxy-alpha-D-glucopyranoside + H2O = 1D-myo-inositol 2-amino-2-deoxy-alpha-D-glucopyranoside + acetate. In terms of biological role, catalyzes the deacetylation of 1D-myo-inositol 2-acetamido-2-deoxy-alpha-D-glucopyranoside (GlcNAc-Ins) in the mycothiol biosynthesis pathway. The sequence is that of 1D-myo-inositol 2-acetamido-2-deoxy-alpha-D-glucopyranoside deacetylase from Mycobacterium tuberculosis (strain ATCC 25177 / H37Ra).